The primary structure comprises 619 residues: 2-succinyl-5-enolpyruvyl-6-hydroxy-3-cyclohexene-1-carboxylate synthase (619 aa).

The span at 385–398 shows a compositional bias: polar residues; the sequence is SSAHQSLAATNSDS. A disordered region spans residues 385-415; it reads SSAHQSLAATNSDSSTDDIIENTDEEGSNES. The segment covering 399–413 has biased composition (acidic residues); the sequence is STDDIIENTDEEGSN.

It belongs to the TPP enzyme family. MenD subfamily. As to quaternary structure, homodimer. It depends on Mg(2+) as a cofactor. Mn(2+) is required as a cofactor. The cofactor is thiamine diphosphate.

The catalysed reaction is isochorismate + 2-oxoglutarate + H(+) = 5-enolpyruvoyl-6-hydroxy-2-succinyl-cyclohex-3-ene-1-carboxylate + CO2. It participates in quinol/quinone metabolism; 1,4-dihydroxy-2-naphthoate biosynthesis; 1,4-dihydroxy-2-naphthoate from chorismate: step 2/7. Its pathway is quinol/quinone metabolism; menaquinone biosynthesis. Catalyzes the thiamine diphosphate-dependent decarboxylation of 2-oxoglutarate and the subsequent addition of the resulting succinic semialdehyde-thiamine pyrophosphate anion to isochorismate to yield 2-succinyl-5-enolpyruvyl-6-hydroxy-3-cyclohexene-1-carboxylate (SEPHCHC). This chain is 2-succinyl-5-enolpyruvyl-6-hydroxy-3-cyclohexene-1-carboxylate synthase, found in Haloquadratum walsbyi (strain DSM 16790 / HBSQ001).